A 118-amino-acid chain; its full sequence is UPF0102 protein Cphy_2398 (118 aa).

Belongs to the UPF0102 family.

The polypeptide is UPF0102 protein Cphy_2398 (Lachnoclostridium phytofermentans (strain ATCC 700394 / DSM 18823 / ISDg) (Clostridium phytofermentans)).